The chain runs to 231 residues: MRIAVIGAMEEEVRILRDKLEQAETETVAGCEFTKGLLAGHEVILLKSGIGKVNAAMSTTILLEKYKPEKVINTGSAGGFHHSLNVGDVVISTEVRHHDVDVTAFNYEYGQVPGMPPGFKADEALVALAEKCMQTEENIQVVKGMIATGDSFMSDPNRVAAIRDKFENLYAVEMEAAAVAQVCHQYEVPFVIIRALSDIAGKESNVSFDQFLDQAALHSTNFIVKVLEELK.

Catalysis depends on E12, which acts as the Proton acceptor. Residues G78, M153, and M174–E175 each bind substrate. Catalysis depends on D198, which acts as the Proton donor.

This sequence belongs to the PNP/UDP phosphorylase family. MtnN subfamily.

The enzyme catalyses S-adenosyl-L-homocysteine + H2O = S-(5-deoxy-D-ribos-5-yl)-L-homocysteine + adenine. The catalysed reaction is S-methyl-5'-thioadenosine + H2O = 5-(methylsulfanyl)-D-ribose + adenine. It carries out the reaction 5'-deoxyadenosine + H2O = 5-deoxy-D-ribose + adenine. The protein operates within amino-acid biosynthesis; L-methionine biosynthesis via salvage pathway; S-methyl-5-thio-alpha-D-ribose 1-phosphate from S-methyl-5'-thioadenosine (hydrolase route): step 1/2. Its function is as follows. Catalyzes the irreversible cleavage of the glycosidic bond in both 5'-methylthioadenosine (MTA) and S-adenosylhomocysteine (SAH/AdoHcy) to adenine and the corresponding thioribose, 5'-methylthioribose and S-ribosylhomocysteine, respectively. Also cleaves 5'-deoxyadenosine, a toxic by-product of radical S-adenosylmethionine (SAM) enzymes, into 5-deoxyribose and adenine. This is 5'-methylthioadenosine/S-adenosylhomocysteine nucleosidase from Bacillus cereus (strain G9842).